The sequence spans 471 residues: Glutamate--tRNA ligase 1 (471 aa).

The short motif at 15-25 (PSPTGYLHIGG) is the 'HIGH' region element. The 'KMSKS' region signature appears at 243–247 (KLSKR). K246 is a binding site for ATP.

It belongs to the class-I aminoacyl-tRNA synthetase family. Glutamate--tRNA ligase type 1 subfamily. As to quaternary structure, monomer.

Its subcellular location is the cytoplasm. The catalysed reaction is tRNA(Glu) + L-glutamate + ATP = L-glutamyl-tRNA(Glu) + AMP + diphosphate. Catalyzes the attachment of glutamate to tRNA(Glu) in a two-step reaction: glutamate is first activated by ATP to form Glu-AMP and then transferred to the acceptor end of tRNA(Glu). This chain is Glutamate--tRNA ligase 1, found in Dinoroseobacter shibae (strain DSM 16493 / NCIMB 14021 / DFL 12).